The following is a 496-amino-acid chain: DNA-directed DNA/RNA polymerase mu (496 aa).

A disordered region spans residues 1–22 (MLPKRRRVRAGSPHSAVASSTP). Serine 12 carries the post-translational modification Phosphoserine. Residues 12–22 (SPHSAVASSTP) are compositionally biased toward low complexity. The region spanning 23–122 (PSVVRFPDVA…QPVPEEGRHH (100 aa)) is the BRCT domain. Na(+)-binding residues include threonine 241 and valine 243. The involved in ssDNA binding stretch occupies residues 323-332 (RGKLQGHDVD). Mg(2+) contacts are provided by aspartate 330, aspartate 332, and aspartate 420.

Belongs to the DNA polymerase type-X family. The cofactor is Mg(2+).

Its subcellular location is the nucleus. It carries out the reaction DNA(n) + a 2'-deoxyribonucleoside 5'-triphosphate = DNA(n+1) + diphosphate. In terms of biological role, gap-filling polymerase involved in repair of DNA double-strand breaks by non-homologous end joining (NHEJ). Participates in immunoglobulin (Ig) light chain gene rearrangement in V(D)J recombination. In Mus musculus (Mouse), this protein is DNA-directed DNA/RNA polymerase mu (Polm).